The primary structure comprises 341 residues: Hyaluronan and proteoglycan link protein 2 (341 aa).

A signal peptide spans 1–27 (MPSWIPLPAFCCLLLPWAFTVFHKTLG). An Ig-like V-type domain is found at 35–143 (PHYLLPPIHE…GIEDESVALT (109 aa)). Disulfide bonds link cysteine 58/cysteine 129, cysteine 171/cysteine 241, cysteine 195/cysteine 216, cysteine 266/cysteine 337, and cysteine 291/cysteine 312. 2 consecutive Link domains span residues 149–243 (VVFP…FCFT) and 246–339 (LAGQ…YCYA).

The protein belongs to the HAPLN family. In terms of tissue distribution, brain.

The protein localises to the secreted. It is found in the extracellular space. It localises to the extracellular matrix. Functionally, mediates a firm binding of versican V2 to hyaluronic acid. May play a pivotal role in the formation of the hyaluronan-associated matrix in the central nervous system (CNS) which facilitates neuronal conduction and general structural stabilization. Binds to hyaluronic acid. In Rattus norvegicus (Rat), this protein is Hyaluronan and proteoglycan link protein 2 (Hapln2).